Here is a 582-residue protein sequence, read N- to C-terminus: Formate--tetrahydrofolate ligase (582 aa).

65 to 72 (TPLGEGKT) lines the ATP pocket.

Belongs to the formate--tetrahydrofolate ligase family.

It catalyses the reaction (6S)-5,6,7,8-tetrahydrofolate + formate + ATP = (6R)-10-formyltetrahydrofolate + ADP + phosphate. Its pathway is one-carbon metabolism; tetrahydrofolate interconversion. This is Formate--tetrahydrofolate ligase from Vibrio campbellii (strain ATCC BAA-1116).